The sequence spans 532 residues: Flavin-containing monooxygenase 1 (532 aa).

A2 is subject to N-acetylalanine. At 2–510 the chain is on the lumenal side; it reads AKRVAIVGAG…TRIVKESPSP (509 aa). FAD is bound by residues 9 to 13, E32, 40 to 41, and 61 to 62; these read GAGVS, LW, and NS. 60-61 serves as a coordination point for NADP(+); that stretch reads SN. N120 carries an N-linked (GlcNAc...) (high mannose) asparagine glycan. Position 195–198 (195–198) interacts with NADP(+); it reads SGTD. The chain crosses the membrane as a helical span at residues 511-531; it reads FASLLKLFSFLALLVAIFQIF. A topological domain (cytoplasmic) is located at residue L532.

This sequence belongs to the FMO family. FAD is required as a cofactor. Liver.

It localises to the endoplasmic reticulum membrane. The catalysed reaction is hypotaurine + NADPH + O2 + H(+) = taurine + NADP(+) + H2O. The enzyme catalyses hypotaurine + NADH + O2 + H(+) = taurine + NAD(+) + H2O. It catalyses the reaction trimethylamine + NADPH + O2 = trimethylamine N-oxide + NADP(+) + H2O. It carries out the reaction N,N-dimethylaniline + NADPH + O2 + H(+) = N,N-dimethylaniline N-oxide + NADP(+) + H2O. Its function is as follows. Broad spectrum monooxygenase that catalyzes the oxygenation of a wide variety of nitrogen- and sulfur-containing compounds including xenobiotics. Catalyzes the S-oxygenation of hypotaurine to produce taurine, an organic osmolyte involved in cell volume regulation as well as a variety of cytoprotective and developmental processes. In vitro, catalyzes the N-oxygenation of trimethylamine (TMA) to produce trimethylamine N-oxide (TMAO) and could therefore participate to the detoxification of this compound that is generated by the action of gut microbiota from dietary precursors such as choline, choline containing compounds, betaine or L-carnitine. In Sus scrofa (Pig), this protein is Flavin-containing monooxygenase 1 (FMO1).